A 626-amino-acid chain; its full sequence is Protein ALEX (626 aa).

Disordered regions lie at residues 1-29 (MMAR…LEPM), 173-223 (TTAH…AAHP), 236-473 (AAPG…APRS), and 556-612 (AASV…NNSR). Composition is skewed to polar residues over residues 186-195 (KSTAAASSRQ) and 255-270 (GSTT…QSRL). Over residues 281–312 (QIRESEQRDPQLRRKQQRWKEPLMPRREEKYP) the composition is skewed to basic and acidic residues. Low complexity predominate over residues 337–346 (QPILTPGQPQ). Residues 366 to 399 (IPTPGQPLPPQPIPTPGRPLTPQPIPTPGRPLTP) show a composition bias toward pro residues. The segment covering 416–435 (RLLRPGQPMSPQLRQTQGLP) has biased composition (low complexity). Residues 436–445 (LPQPLLPPGQ) are compositionally biased toward pro residues. Positions 570 to 579 (ALSRSRRYPW) are enriched in basic residues. Polar residues predominate over residues 600-611 (RRNAVSSSTNNS).

The protein belongs to the ALEX family. In terms of assembly, interacts with the N-terminal region of the XLas isoforms of guanine nucleotide-binding protein G(s) subunit alpha.

The protein resides in the cell membrane. It localises to the cell projection. The protein localises to the ruffle. Its function is as follows. May inhibit the adenylyl cyclase-stimulating activity of guanine nucleotide-binding protein G(s) subunit alpha which is produced from the same locus in a different open reading frame. The polypeptide is Protein ALEX (Homo sapiens (Human)).